A 486-amino-acid chain; its full sequence is Glutamyl-tRNA(Gln) amidotransferase subunit A (486 aa).

Residues Lys-77 and Ser-152 each act as charge relay system in the active site. Ser-176 acts as the Acyl-ester intermediate in catalysis.

Belongs to the amidase family. GatA subfamily. In terms of assembly, heterotrimer of A, B and C subunits.

The enzyme catalyses L-glutamyl-tRNA(Gln) + L-glutamine + ATP + H2O = L-glutaminyl-tRNA(Gln) + L-glutamate + ADP + phosphate + H(+). Its function is as follows. Allows the formation of correctly charged Gln-tRNA(Gln) through the transamidation of misacylated Glu-tRNA(Gln) in organisms which lack glutaminyl-tRNA synthetase. The reaction takes place in the presence of glutamine and ATP through an activated gamma-phospho-Glu-tRNA(Gln). The chain is Glutamyl-tRNA(Gln) amidotransferase subunit A from Lactococcus lactis subsp. cremoris (strain SK11).